The chain runs to 999 residues: Sarcoplasmic/endoplasmic reticulum calcium ATPase 3 (999 aa).

At Met1 the chain carries N-acetylmethionine. Residues 1 to 48 lie on the Cytoplasmic side of the membrane; that stretch reads MEEAHLLPAADVLRRFSVTAEGGLSPAQVTRARERYGPNELPTEEGKS. The residue at position 17 (Ser17) is a Phosphoserine. Thr19 is modified (phosphothreonine). Ser25 carries the post-translational modification Phosphoserine. A helical membrane pass occupies residues 49-69; that stretch reads LWELVLEQFEDLLVRILLLAA. Residues 70–89 are Extracellular-facing; it reads LVSFVLACFEEGEETTTAFV. The helical transmembrane segment at 90 to 110 threads the bilayer; the sequence is EPLVIVLILVANAVVGVWQER. The Cytoplasmic segment spans residues 111–253; it reads NAENAIEALK…PERTPLQQKL (143 aa). The chain crosses the membrane as a helical span at residues 254–273; it reads DEFGRQLSRAISVICMAVWV. The Extracellular portion of the chain corresponds to 274–295; the sequence is INIGHFADPAHGGSWLRGAVYY. The chain crosses the membrane as a helical span at residues 296–313; sequence FKIAVALAVAAIPEGLPA. Positions 304, 305, 307, and 309 each coordinate Ca(2+). Topologically, residues 314–757 are cytoplasmic; the sequence is VITTCLALGT…EEGRAIYSNM (444 aa). The active-site 4-aspartylphosphate intermediate is the Asp351. Mg(2+) contacts are provided by Asp351 and Thr353. Thr353 lines the ATP pocket. The interval 370–400 is interaction with phospholamban 1; that stretch reads AEAEAGTCRLHEFTISGTTYAPEGEVRQGEQ. Thr415 carries the post-translational modification Phosphothreonine. 7 residues coordinate ATP: Glu442, Arg489, Lys515, Arg560, Thr625, Gly626, and Asp627. Ser662 is modified (phosphoserine). The ATP site is built by Arg678 and Lys684. Asp703 lines the Mg(2+) pocket. Asn706 is a binding site for ATP. A helical membrane pass occupies residues 758–777; it reads KQFIRYLISSNVGEVVCIFL. Asn768 and Glu771 together coordinate Ca(2+). The Extracellular segment spans residues 778–787; it reads TAILGLPEAL. Residues 788-808 form a helical membrane-spanning segment; the sequence is IPVQLLWVNLVTDGLPATALG. An interaction with phospholamban 2 region spans residues 788–808; that stretch reads IPVQLLWVNLVTDGLPATALG. 3 residues coordinate Ca(2+): Asn796, Thr799, and Asp800. Residues 809-828 are Cytoplasmic-facing; it reads FNPPDLDIMEKRPRNPREAL. The helical transmembrane segment at 829–851 threads the bilayer; it reads ISGWLFFRYLAIGVYVGLATVAA. Residues 852–897 lie on the Extracellular side of the membrane; the sequence is ATWWFLYDAEGPQVTFYQLRNFLKCSEDNPLFTGTDCEVFESRFPT. A disulfide bridge links Cys876 with Cys888. The helical transmembrane segment at 898-917 threads the bilayer; that stretch reads TMALSVLVTTEMCNALNSVS. Residue Glu908 coordinates Ca(2+). At 918–930 the chain is on the cytoplasmic side; that stretch reads ENQSLLRMPPWLN. The helical transmembrane segment at 931 to 949 threads the bilayer; sequence PWLLAAVAMSMALHFLILL. Topologically, residues 950 to 964 are extracellular; it reads VPPLPLIFQVTPLSG. A helical membrane pass occupies residues 965-985; that stretch reads RQWVVVLQISLPVILLDEALK. At 986–999 the chain is on the cytoplasmic side; the sequence is YLSRKHVDEEKGRQ.

The protein belongs to the cation transport ATPase (P-type) (TC 3.A.3) family. Type IIA subfamily. As to quaternary structure, interacts with sarcolipin (SLN). Interacts with phospholamban (PLN). Interacts with myoregulin (MRLN). Interacts with DWORF. Interacts with VMP1. Interacts with TUNAR; the interaction occurs at low levels in low glucose conditions and is increased by high glucose levels. Mg(2+) serves as cofactor. In terms of tissue distribution, expressed in endothelial tissues.

It is found in the endoplasmic reticulum membrane. The protein resides in the sarcoplasmic reticulum membrane. It carries out the reaction Ca(2+)(in) + ATP + H2O = Ca(2+)(out) + ADP + phosphate + H(+). With respect to regulation, inhibited by sarcolipin (SLN), phospholamban (PLN) and myoregulin (MRLN). Enhanced by DWORF; DWORF increases activity by displacing sarcolipin (SLN), phospholamban (PLN) and myoregulin (MRLN). Its function is as follows. This magnesium-dependent enzyme catalyzes the hydrolysis of ATP coupled with the transport of calcium. Transports calcium ions from the cytosol into the sarcoplasmic/endoplasmic reticulum lumen. Contributes to calcium sequestration involved in muscular excitation/contraction. This is Sarcoplasmic/endoplasmic reticulum calcium ATPase 3 (ATP2A3) from Sus scrofa (Pig).